The sequence spans 263 residues: 3'-5' ssDNA/RNA exonuclease TatD (263 aa).

The a divalent metal cation site is built by E91, H127, and H152.

This sequence belongs to the metallo-dependent hydrolases superfamily. TatD-type hydrolase family. TatD subfamily. In terms of assembly, monomer. Mg(2+) serves as cofactor.

It is found in the cytoplasm. Its function is as follows. 3'-5' exonuclease that prefers single-stranded DNA and RNA. May play a role in the H(2)O(2)-induced DNA damage repair. The sequence is that of 3'-5' ssDNA/RNA exonuclease TatD from Klebsiella pneumoniae (strain 342).